A 98-amino-acid chain; its full sequence is YcgL domain-containing protein Ping_1076 (98 aa).

A YcgL domain is found at 1-85 (MLCAVYKSIR…PPVNHLQEHK (85 aa)). A disordered region spans residues 75–98 (PPPVNHLQEHKDWKKKRQENKNEI).

This is YcgL domain-containing protein Ping_1076 from Psychromonas ingrahamii (strain DSM 17664 / CCUG 51855 / 37).